Here is a 104-residue protein sequence, read N- to C-terminus: uncharacterized protein (104 aa).

The disordered stretch occupies residues Met1–Glu24.

This is an uncharacterized protein from Saccharomyces cerevisiae (strain ATCC 204508 / S288c) (Baker's yeast).